A 366-amino-acid chain; its full sequence is Ribosomal RNA large subunit methyltransferase M (366 aa).

S-adenosyl-L-methionine-binding positions include serine 188, 221–224 (CPGG), aspartate 240, aspartate 260, and aspartate 277. The Proton acceptor role is filled by lysine 306.

The protein belongs to the class I-like SAM-binding methyltransferase superfamily. RNA methyltransferase RlmE family. RlmM subfamily. As to quaternary structure, monomer.

The protein resides in the cytoplasm. The catalysed reaction is cytidine(2498) in 23S rRNA + S-adenosyl-L-methionine = 2'-O-methylcytidine(2498) in 23S rRNA + S-adenosyl-L-homocysteine + H(+). In terms of biological role, catalyzes the 2'-O-methylation at nucleotide C2498 in 23S rRNA. The sequence is that of Ribosomal RNA large subunit methyltransferase M from Escherichia coli O45:K1 (strain S88 / ExPEC).